Here is a 457-residue protein sequence, read N- to C-terminus: uncharacterized protein (457 aa).

This is an uncharacterized protein from Acanthamoeba polyphaga mimivirus (APMV).